We begin with the raw amino-acid sequence, 545 residues long: Cannabidiolic acid synthase-like 1 (545 aa).

Positions 1–28 are cleaved as a signal peptide; the sequence is MKCSTFCFWYVCKIIFFFLSFNIQISIA. Cys-37 and Cys-99 are oxidised to a cystine. N-linked (GlcNAc...) asparagine glycosylation is found at Asn-45, Asn-65, Asn-89, and Asn-168. Residues 77–251 form the FAD-binding PCMH-type domain; it reads TTPKPLVIIT…AAWKIRLVAV (175 aa). Residues 114–176 constitute a cross-link (6-(S-cysteinyl)-8alpha-(pros-histidyl)-FAD (His-Cys)); it reads HDAEGMSYIS…ENLSFPAGYC (63 aa). His-292 serves as a coordination point for substrate. N-linked (GlcNAc...) asparagine glycosylation is found at Asn-297, Asn-305, Asn-329, and Asn-361. Residue Tyr-417 coordinates substrate. Asn-467 is a glycosylation site (N-linked (GlcNAc...) asparagine). Catalysis depends on Tyr-484, which acts as the Proton acceptor. Asn-499 is a glycosylation site (N-linked (GlcNAc...) asparagine).

The protein belongs to the oxygen-dependent FAD-linked oxidoreductase family. It depends on FAD as a cofactor. The FAD cofactor is bound via a bicovalent 6-S-cysteinyl, 8alpha-N1-histidyl FAD linkage.

It localises to the secreted. In terms of biological role, has no cannabidiolic acid synthase activity. The sequence is that of Cannabidiolic acid synthase-like 1 (CBDAS2) from Cannabis sativa (Hemp).